Consider the following 94-residue polypeptide: Small ribosomal subunit protein uS17 (94 aa).

It belongs to the universal ribosomal protein uS17 family. Part of the 30S ribosomal subunit.

In terms of biological role, one of the primary rRNA binding proteins, it binds specifically to the 5'-end of 16S ribosomal RNA. The sequence is that of Small ribosomal subunit protein uS17 from Streptomyces griseus subsp. griseus (strain JCM 4626 / CBS 651.72 / NBRC 13350 / KCC S-0626 / ISP 5235).